The following is a 138-amino-acid chain: Transcription factor Atoh7-a (138 aa).

Positions 33-85 (KRRLAANARERRRMQGLNTAFDSLRKVVPQWGEDKQLSKYETLQMALSYIMAL) constitute a bHLH domain.

It localises to the nucleus. Its subcellular location is the perikaryon. It is found in the cell projection. The protein localises to the axon. Functionally, transcription factor that binds to DNA at the consensus sequence 5'-CAG[GC]TG-3'. Positively regulates the determination of retinal ganglion cell fate and formation of the optic nerve and retino-hypothalamic tract. Required for retinal circadian rhythm photoentrainment. Plays a role in brainstem auditory signaling and binaural processing. Regulates the differentiation of olfactory receptor neurons. During retinal neurogenesis, activates the transcription of several genes such as brn3d, coe3, cbfa2t2, glis2, elrC and xgadd45-gamma. The chain is Transcription factor Atoh7-a from Xenopus laevis (African clawed frog).